The chain runs to 308 residues: MRKLVVGSRRSKLALTQSQQFIDKLKAVEPNLEIEIKEIVTKGDRIVDKQLSKVGGKGLFVKEIQHELFEKNIDMAIHSLKDVPSVIPEGLTLGCIPDRELPFDAYISKTHTPLSQLPEGSIIGTSSLRRGAQILSKYPNLEIKWIRGNIDTRLEKLQTEDYDAIILAAAGLRRMGWSDDIVTSYLDRDTLLPAIGQGALGIECRSDDEELLTLLSKVHNDEVAKCVTAERTFLAEMDGSCQVPIAGYATISDQNEIEFTGLIMTPDGKERFEYTMNGTDPVELGKTVSNKLKEQGAYEIIKRLNEQH.

C241 carries the S-(dipyrrolylmethanemethyl)cysteine modification.

It belongs to the HMBS family. Monomer. It depends on dipyrromethane as a cofactor.

The catalysed reaction is 4 porphobilinogen + H2O = hydroxymethylbilane + 4 NH4(+). It participates in porphyrin-containing compound metabolism; protoporphyrin-IX biosynthesis; coproporphyrinogen-III from 5-aminolevulinate: step 2/4. Its function is as follows. Tetrapolymerization of the monopyrrole PBG into the hydroxymethylbilane pre-uroporphyrinogen in several discrete steps. In Staphylococcus aureus (strain Newman), this protein is Porphobilinogen deaminase.